A 406-amino-acid polypeptide reads, in one-letter code: uncharacterized protein (406 aa).

It belongs to the glycosyltransferase group 1 family. Glycosyltransferase 4 subfamily.

This is an uncharacterized protein from Methanocaldococcus jannaschii (strain ATCC 43067 / DSM 2661 / JAL-1 / JCM 10045 / NBRC 100440) (Methanococcus jannaschii).